Consider the following 202-residue polypeptide: MKSSPKSLKMRDNLLDGTFVVIDLEATGFDVEKSEVIDLAAVRVEGGIITEKFSTLVYPGYFIPERIKKLTGITNAMLVGQPTIEEVLPEFLEFVGDNIVVGHFVEQDIKFINKYTKQYRGKKFRNPSLCTLKLARKVFPGLKKYSLKEIAENFGFETNGVHRALKDATLTAEIFIKILEELWFKYGIGDYYSLKRLEKGKF.

The a divalent metal cation site is built by D23 and E25. Substrate contacts are provided by D23 and E25. H162 (proton acceptor) is an active-site residue. An a divalent metal cation-binding site is contributed by D167. D167 serves as a coordination point for substrate.

In terms of assembly, DNA polymerase III contains a core (composed of alpha, epsilon and theta chains) that associates with a tau subunit. This core dimerizes to form the POLIII' complex. PolIII' associates with the gamma complex (composed of gamma, delta, delta', psi and chi chains) and with the beta chain to form the complete DNA polymerase III complex. The cofactor is Mg(2+). Mn(2+) serves as cofactor.

The enzyme catalyses DNA(n) + a 2'-deoxyribonucleoside 5'-triphosphate = DNA(n+1) + diphosphate. In terms of biological role, DNA polymerase III is a complex, multichain enzyme responsible for most of the replicative synthesis in bacteria. The epsilon subunit contain the editing function and is a proofreading 3'-5' exonuclease. The protein is DNA polymerase III subunit epsilon (dnaQ) of Aquifex aeolicus (strain VF5).